Here is a 261-residue protein sequence, read N- to C-terminus: WW domain-binding protein 2 (261 aa).

The 84-residue stretch at Met-1–Gln-84 folds into the GRAM domain. Residue Tyr-192 is modified to Phosphotyrosine; by YES and SRC. The short motif at Pro-196 to Tyr-200 is the PPxY motif 1 element. Positions Pro-196 to Ser-209 are enriched in pro residues. The tract at residues Pro-196–Gln-261 is disordered. The span at Ala-218–Ala-230 shows a compositional bias: low complexity. Tyr-231 is modified (phosphotyrosine; by YES and SRC). Over residues Ser-245–Pro-254 the composition is skewed to pro residues. The PPxY motif 2 motif lies at Pro-248–Tyr-252.

As to quaternary structure, binds to the WW domain of YAP1, WWP1 and WWP2. Interacts with NEDD4. Interacts with ESR1 and UBE3A. Phosphorylated in repsonse to EGF as well as estrogen and progesterone hormones. Tyr-192 and Tyr-231 are phosphorylated by YES and SRC inducing nuclear translocation. Ubiquitous.

The protein localises to the cytoplasm. It is found in the nucleus. Functionally, acts as a transcriptional coactivator of estrogen and progesterone receptors (ESR1 and PGR) upon hormone activation. In presence of estrogen, binds to ESR1-responsive promoters. Synergizes with YAP1 to enhance PGR activity. Modulates expression of post-synaptic scaffolding proteins via regulation of ESR1, ESR2 and PGR. This chain is WW domain-binding protein 2, found in Homo sapiens (Human).